The chain runs to 418 residues: Gamma-glutamyl phosphate reductase (418 aa).

Belongs to the gamma-glutamyl phosphate reductase family.

The protein localises to the cytoplasm. It carries out the reaction L-glutamate 5-semialdehyde + phosphate + NADP(+) = L-glutamyl 5-phosphate + NADPH + H(+). It participates in amino-acid biosynthesis; L-proline biosynthesis; L-glutamate 5-semialdehyde from L-glutamate: step 2/2. Functionally, catalyzes the NADPH-dependent reduction of L-glutamate 5-phosphate into L-glutamate 5-semialdehyde and phosphate. The product spontaneously undergoes cyclization to form 1-pyrroline-5-carboxylate. This chain is Gamma-glutamyl phosphate reductase, found in Halothermothrix orenii (strain H 168 / OCM 544 / DSM 9562).